The primary structure comprises 371 residues: 4-hydroxy-3-methylbut-2-en-1-yl diphosphate synthase (flavodoxin) (371 aa).

[4Fe-4S] cluster is bound by residues Cys-270, Cys-273, Cys-305, and Glu-312.

This sequence belongs to the IspG family. [4Fe-4S] cluster serves as cofactor.

The enzyme catalyses (2E)-4-hydroxy-3-methylbut-2-enyl diphosphate + oxidized [flavodoxin] + H2O + 2 H(+) = 2-C-methyl-D-erythritol 2,4-cyclic diphosphate + reduced [flavodoxin]. It participates in isoprenoid biosynthesis; isopentenyl diphosphate biosynthesis via DXP pathway; isopentenyl diphosphate from 1-deoxy-D-xylulose 5-phosphate: step 5/6. In terms of biological role, converts 2C-methyl-D-erythritol 2,4-cyclodiphosphate (ME-2,4cPP) into 1-hydroxy-2-methyl-2-(E)-butenyl 4-diphosphate. The protein is 4-hydroxy-3-methylbut-2-en-1-yl diphosphate synthase (flavodoxin) of Chromohalobacter salexigens (strain ATCC BAA-138 / DSM 3043 / CIP 106854 / NCIMB 13768 / 1H11).